Reading from the N-terminus, the 813-residue chain is Protein tramtrack, alpha isoform (813 aa).

The region spanning 33–98 is the BTB domain; the sequence is TDVTLAVEGQ…MYRGEVSVDQ (66 aa). 4 disordered regions span residues 118–148, 171–324, 356–428, and 526–585; these read EVND…PQLQ, ANAG…GPSE, TTPA…MPKK, and AGLP…LDDQ. A compositionally biased stretch (low complexity) spans 125 to 145; sequence SPAAAAAGAGATGSESTATTP. The span at 176-187 shows a compositional bias: polar residues; sequence TPTLPVQPSLLS. Positions 192–201 are enriched in basic residues; that stretch reads PKRKRGRPRK. Phosphoserine occurs at positions 203, 205, and 206. At Thr-209 the chain carries Phosphothreonine. A compositionally biased stretch (basic and acidic residues) spans 254-285; the sequence is HTDDLNESRDSLPSKRSKNSKDHRVVSHHEDN. Composition is skewed to polar residues over residues 302 to 324, 356 to 369, and 377 to 388; these read LFGS…GPSE, TTPA…TPTK, and ATGSNNSNSLLK. Residues 560 to 578 are compositionally biased toward basic residues; sequence SGKKGAKRPIQRRRVRRKA. 2 C2H2-type zinc fingers span residues 610-638 and 646-669; these read YRCT…FLYH and FPCP…KMTH. Ser-682 bears the Phosphoserine mark.

In terms of assembly, interacts with CoRest/CG33525, suggesting that it acts by recruiting a CoRest-containing corepressor complex. Interacts with phyl.

It localises to the nucleus. Its function is as follows. Binds to a number of sites in the transcriptional regulatory region of ftz. Isoform alpha is required to repress genes that promote the R7 cell fate. Probable repressor of the transcription of the segmentation genes ftz, eve, h, odd, run, and en. May bind to the region 5'-AGGG[CT]GG-3'. Degradation of ttk is directed by binding of sinah or sina, via the adapter molecule phyl which binds to the BTB domain of ttk. This Drosophila melanogaster (Fruit fly) protein is Protein tramtrack, alpha isoform (ttk).